A 215-amino-acid polypeptide reads, in one-letter code: Cytochrome b6 (215 aa).

A helical transmembrane segment spans residues 32–52; sequence IFYCLGGITLTCFLIQVATGF. Cys35 contributes to the heme c binding site. 2 residues coordinate heme b: His86 and His100. 3 consecutive transmembrane segments (helical) span residues 90–110, 116–136, and 186–206; these read ASMM…TGGF, LTWV…VTGY, and LHTF…FLMI. 2 residues coordinate heme b: His187 and His202.

The protein belongs to the cytochrome b family. PetB subfamily. As to quaternary structure, the 4 large subunits of the cytochrome b6-f complex are cytochrome b6, subunit IV (17 kDa polypeptide, PetD), cytochrome f and the Rieske protein, while the 4 small subunits are PetG, PetL, PetM and PetN. The complex functions as a dimer. The cofactor is heme b. It depends on heme c as a cofactor.

Its subcellular location is the plastid. It is found in the chloroplast thylakoid membrane. In terms of biological role, component of the cytochrome b6-f complex, which mediates electron transfer between photosystem II (PSII) and photosystem I (PSI), cyclic electron flow around PSI, and state transitions. The polypeptide is Cytochrome b6 (Spirogyra maxima (Green alga)).